We begin with the raw amino-acid sequence, 423 residues long: Serine--tRNA ligase (423 aa).

L-serine is bound at residue T231–E233. An ATP-binding site is contributed by R262–E264. E285 lines the L-serine pocket. E349–S352 is a binding site for ATP. S384 is an L-serine binding site.

Belongs to the class-II aminoacyl-tRNA synthetase family. Type-1 seryl-tRNA synthetase subfamily. Homodimer. The tRNA molecule binds across the dimer.

The protein resides in the cytoplasm. It carries out the reaction tRNA(Ser) + L-serine + ATP = L-seryl-tRNA(Ser) + AMP + diphosphate + H(+). The catalysed reaction is tRNA(Sec) + L-serine + ATP = L-seryl-tRNA(Sec) + AMP + diphosphate + H(+). It participates in aminoacyl-tRNA biosynthesis; selenocysteinyl-tRNA(Sec) biosynthesis; L-seryl-tRNA(Sec) from L-serine and tRNA(Sec): step 1/1. Functionally, catalyzes the attachment of serine to tRNA(Ser). Is also able to aminoacylate tRNA(Sec) with serine, to form the misacylated tRNA L-seryl-tRNA(Sec), which will be further converted into selenocysteinyl-tRNA(Sec). The polypeptide is Serine--tRNA ligase (Lactococcus lactis subsp. cremoris (strain SK11)).